Here is a 322-residue protein sequence, read N- to C-terminus: Breast cancer metastasis-suppressor 1-like protein (322 aa).

The segment covering 1–16 (MPVHSREKKESNHNDM) has biased composition (basic and acidic residues). Residues 1–56 (MPVHSREKKESNHNDMEVDYPENEGTSSEEDDSDSSSGSEEGDSSEMDDEDCERRR) are disordered. Residues 17-51 (EVDYPENEGTSSEEDDSDSSSGSEEGDSSEMDDED) are compositionally biased toward acidic residues. Coiled coils occupy residues 50–82 (EDCE…KERL) and 147–178 (EKLL…ITSE).

Belongs to the BRMS1 family.

The protein resides in the nucleus. In terms of biological role, involved in the histone deacetylase (HDAC1)-dependent transcriptional repression activity. The polypeptide is Breast cancer metastasis-suppressor 1-like protein (brms1l) (Xenopus tropicalis (Western clawed frog)).